Here is a 268-residue protein sequence, read N- to C-terminus: 4-hydroxy-tetrahydrodipicolinate reductase (268 aa).

8 to 13 (GAAGRM) lines the NAD(+) pocket. Arg-36 lines the NADP(+) pocket. NAD(+) contacts are provided by residues 99–101 (GTT) and 123–126 (AANF). His-156 functions as the Proton donor/acceptor in the catalytic mechanism. (S)-2,3,4,5-tetrahydrodipicolinate is bound at residue His-157. Lys-160 (proton donor) is an active-site residue. 166-167 (GT) is a binding site for (S)-2,3,4,5-tetrahydrodipicolinate.

The protein belongs to the DapB family.

It is found in the cytoplasm. The enzyme catalyses (S)-2,3,4,5-tetrahydrodipicolinate + NAD(+) + H2O = (2S,4S)-4-hydroxy-2,3,4,5-tetrahydrodipicolinate + NADH + H(+). The catalysed reaction is (S)-2,3,4,5-tetrahydrodipicolinate + NADP(+) + H2O = (2S,4S)-4-hydroxy-2,3,4,5-tetrahydrodipicolinate + NADPH + H(+). It participates in amino-acid biosynthesis; L-lysine biosynthesis via DAP pathway; (S)-tetrahydrodipicolinate from L-aspartate: step 4/4. Its function is as follows. Catalyzes the conversion of 4-hydroxy-tetrahydrodipicolinate (HTPA) to tetrahydrodipicolinate. This Pseudomonas fluorescens (strain ATCC BAA-477 / NRRL B-23932 / Pf-5) protein is 4-hydroxy-tetrahydrodipicolinate reductase.